Reading from the N-terminus, the 103-residue chain is Large ribosomal subunit protein bL21 (103 aa).

Belongs to the bacterial ribosomal protein bL21 family. In terms of assembly, part of the 50S ribosomal subunit. Contacts protein L20.

In terms of biological role, this protein binds to 23S rRNA in the presence of protein L20. In Pseudomonas fluorescens (strain Pf0-1), this protein is Large ribosomal subunit protein bL21.